Here is a 23-residue protein sequence, read N- to C-terminus: Alyteserin-1b (23 aa).

Asn-23 carries the post-translational modification Asparagine amide.

Expressed by the skin glands.

It is found in the secreted. The protein resides in the target cell membrane. Antibacterial peptide with amphipathic alpha-helical structure. Shows selective growth inhibitory activity against the Gram-negative bacteria E.coli (MIC=25 uM). Has a weak hemolytic activity against human erythrocytes (LC(50)=200 uM). Is not active against S.aureus (MIC=200 uM). This chain is Alyteserin-1b, found in Alytes obstetricans (Common midwife toad).